Reading from the N-terminus, the 179-residue chain is uncharacterized protein (179 aa).

3 helical membrane-spanning segments follow: residues 29–49, 76–96, and 97–117; these read LLGISFFCLVIIMATSLGPLI, AKHMLVFWMVFGILTSLDAYS, and GAIISFIPLWYTMKFFFLLWA.

The protein belongs to the DP1 family.

Its subcellular location is the membrane. This is an uncharacterized protein from Encephalitozoon cuniculi (strain GB-M1) (Microsporidian parasite).